The primary structure comprises 364 residues: Apyrase (364 aa).

A signal peptide spans 1–35 (MRSSYRVGNPIRFQPTNVVGLLLLSLVLSFMLVQS).

The protein belongs to the apyrase family. The cofactor is Ca(2+). As to expression, salivary gland (at protein level).

Its subcellular location is the secreted. The enzyme catalyses a ribonucleoside 5'-triphosphate + 2 H2O = a ribonucleoside 5'-phosphate + 2 phosphate + 2 H(+). Its function is as follows. Facilitates hematophagy by inhibiting ADP-dependent platelet aggregation in the host. Cleaves adenosine triphosphate (ATP) and adenosine diphosphate (ADP) to adenosine monophosphate (AMP) and inorganic phosphate in calcium-dependent manner. This chain is Apyrase, found in Cimex lectularius (Bed bug).